Reading from the N-terminus, the 217-residue chain is Pyridoxine/pyridoxamine 5'-phosphate oxidase (217 aa).

Residues arginine 13–tyrosine 16 and lysine 71 contribute to the substrate site. FMN is bound by residues arginine 66 to lysine 71, tyrosine 81 to threonine 82, arginine 87, lysine 88, and glutamine 110. Residues tyrosine 128, arginine 132, and serine 136 each coordinate substrate. FMN-binding positions include glutamine 145–serine 146 and tryptophan 190. Arginine 196–histidine 198 contacts substrate. Residue arginine 200 coordinates FMN.

Belongs to the pyridoxamine 5'-phosphate oxidase family. In terms of assembly, homodimer. Requires FMN as cofactor.

It catalyses the reaction pyridoxamine 5'-phosphate + O2 + H2O = pyridoxal 5'-phosphate + H2O2 + NH4(+). The catalysed reaction is pyridoxine 5'-phosphate + O2 = pyridoxal 5'-phosphate + H2O2. It participates in cofactor metabolism; pyridoxal 5'-phosphate salvage; pyridoxal 5'-phosphate from pyridoxamine 5'-phosphate: step 1/1. Its pathway is cofactor metabolism; pyridoxal 5'-phosphate salvage; pyridoxal 5'-phosphate from pyridoxine 5'-phosphate: step 1/1. Its function is as follows. Catalyzes the oxidation of either pyridoxine 5'-phosphate (PNP) or pyridoxamine 5'-phosphate (PMP) into pyridoxal 5'-phosphate (PLP). The protein is Pyridoxine/pyridoxamine 5'-phosphate oxidase of Rubrobacter xylanophilus (strain DSM 9941 / JCM 11954 / NBRC 16129 / PRD-1).